The chain runs to 551 residues: Hydroxylamine reductase (551 aa).

[2Fe-2S] cluster is bound by residues cysteine 3, cysteine 6, cysteine 18, and cysteine 25. 8 residues coordinate hybrid [4Fe-2O-2S] cluster: histidine 249, glutamate 273, cysteine 317, cysteine 405, cysteine 433, cysteine 459, glutamate 493, and lysine 495. The residue at position 405 (cysteine 405) is a Cysteine persulfide.

It belongs to the HCP family. It depends on [2Fe-2S] cluster as a cofactor. Hybrid [4Fe-2O-2S] cluster is required as a cofactor.

It localises to the cytoplasm. The catalysed reaction is A + NH4(+) + H2O = hydroxylamine + AH2 + H(+). In terms of biological role, catalyzes the reduction of hydroxylamine to form NH(3) and H(2)O. The chain is Hydroxylamine reductase from Actinobacillus pleuropneumoniae serotype 7 (strain AP76).